The chain runs to 872 residues: DNA mismatch repair protein MutS (872 aa).

The segment covering Met1–Val17 has biased composition (polar residues). The segment at Met1–Gly22 is disordered. An ATP-binding site is contributed by Gly632–Ser639.

It belongs to the DNA mismatch repair MutS family.

This protein is involved in the repair of mismatches in DNA. It is possible that it carries out the mismatch recognition step. This protein has a weak ATPase activity. The chain is DNA mismatch repair protein MutS from Azoarcus sp. (strain BH72).